The following is a 124-amino-acid chain: Acidic phospholipase A2 (124 aa).

Intrachain disulfides connect cysteine 26/cysteine 116, cysteine 28/cysteine 44, cysteine 43/cysteine 95, cysteine 49/cysteine 124, cysteine 50/cysteine 88, cysteine 57/cysteine 81, and cysteine 75/cysteine 86. Residues tyrosine 27, glycine 29, and glycine 31 each contribute to the Ca(2+) site. Histidine 47 is an active-site residue. Aspartate 48 serves as a coordination point for Ca(2+). The active site involves aspartate 89.

This sequence belongs to the phospholipase A2 family. Group II subfamily. D49 sub-subfamily. Ca(2+) serves as cofactor. In terms of tissue distribution, expressed by the venom gland.

The protein resides in the secreted. It catalyses the reaction a 1,2-diacyl-sn-glycero-3-phosphocholine + H2O = a 1-acyl-sn-glycero-3-phosphocholine + a fatty acid + H(+). Functionally, snake venom phospholipase A2 (PLA2) that inhibits ADP-induced platelet aggregation. PLA2 catalyzes the calcium-dependent hydrolysis of the 2-acyl groups in 3-sn-phosphoglycerides. The polypeptide is Acidic phospholipase A2 (Gloydius ussuriensis (Ussuri mamushi)).